A 276-amino-acid polypeptide reads, in one-letter code: MEPLWHKLSALPFFSSRPEKWEGSGAPPSLTAFIRSLFKGKALSLELYATALTHRSMVHDTTAPEITRSNQRLEFLGDSVLGLIISEYLYRRFPEGTEGELSSYRAKIVNGKSLAGFARNLDLGIHLIIGESADQQRIRTSTSTLADAFEALTGAIYLDRGLDAVREFIEEQIIDSPAFEAMVSTENNHKSRLIEHTQSHQLPPPVYTVLSEEGAEHEKTFTIEVSCNGRRLGRGTALRKKDAEQLAAEEAMGALERALTGDVAEDTPAPEETGRG.

One can recognise an RNase III domain in the interval 30–161; it reads LTAFIRSLFK…LTGAIYLDRG (132 aa). Glu74 serves as a coordination point for Mg(2+). Asp78 is a catalytic residue. Mg(2+) is bound by residues Asp147 and Glu150. Glu150 is a catalytic residue. Residues 188–257 form the DRBM domain; that stretch reads NHKSRLIEHT…AEEAMGALER (70 aa).

Belongs to the ribonuclease III family. Homodimer. Mg(2+) serves as cofactor.

It localises to the cytoplasm. The catalysed reaction is Endonucleolytic cleavage to 5'-phosphomonoester.. In terms of biological role, digests double-stranded RNA. Involved in the processing of primary rRNA transcript to yield the immediate precursors to the large and small rRNAs (23S and 16S). Processes some mRNAs, and tRNAs when they are encoded in the rRNA operon. Processes pre-crRNA and tracrRNA of type II CRISPR loci if present in the organism. This chain is Ribonuclease 3, found in Chlorobium luteolum (strain DSM 273 / BCRC 81028 / 2530) (Pelodictyon luteolum).